The chain runs to 530 residues: Arginine--tRNA ligase (530 aa).

The short motif at 113 to 123 is the 'HIGH' region element; it reads ANPTGPLHIGH.

Belongs to the class-I aminoacyl-tRNA synthetase family. Monomer.

It localises to the cytoplasm. It catalyses the reaction tRNA(Arg) + L-arginine + ATP = L-arginyl-tRNA(Arg) + AMP + diphosphate. In Campylobacter jejuni (strain RM1221), this protein is Arginine--tRNA ligase.